A 297-amino-acid chain; its full sequence is Homoserine kinase (297 aa).

82-92 is an ATP binding site; sequence PVSRGLGSSAA.

This sequence belongs to the GHMP kinase family. Homoserine kinase subfamily.

It localises to the cytoplasm. It carries out the reaction L-homoserine + ATP = O-phospho-L-homoserine + ADP + H(+). The protein operates within amino-acid biosynthesis; L-threonine biosynthesis; L-threonine from L-aspartate: step 4/5. Functionally, catalyzes the ATP-dependent phosphorylation of L-homoserine to L-homoserine phosphate. This is Homoserine kinase from Clostridium botulinum (strain 657 / Type Ba4).